Reading from the N-terminus, the 152-residue chain is Large ribosomal subunit protein uL13 (152 aa).

A disordered region spans residues histidine 130–serine 152.

Belongs to the universal ribosomal protein uL13 family. Part of the 50S ribosomal subunit.

Functionally, this protein is one of the early assembly proteins of the 50S ribosomal subunit, although it is not seen to bind rRNA by itself. It is important during the early stages of 50S assembly. The chain is Large ribosomal subunit protein uL13 from Dinoroseobacter shibae (strain DSM 16493 / NCIMB 14021 / DFL 12).